The chain runs to 592 residues: Aspartate--tRNA ligase (592 aa).

Position 177 (Glu177) interacts with L-aspartate. Residues 201–204 are aspartate; the sequence is QIFK. Arg223 contacts L-aspartate. ATP is bound by residues 223-225 and Gln232; that span reads RDE. L-aspartate is bound at residue His451. Glu485 provides a ligand contact to ATP. Arg492 provides a ligand contact to L-aspartate. Position 537–540 (537–540) interacts with ATP; sequence GLDR.

It belongs to the class-II aminoacyl-tRNA synthetase family. Type 1 subfamily. As to quaternary structure, homodimer.

It localises to the cytoplasm. It catalyses the reaction tRNA(Asp) + L-aspartate + ATP = L-aspartyl-tRNA(Asp) + AMP + diphosphate. Its function is as follows. Catalyzes the attachment of L-aspartate to tRNA(Asp) in a two-step reaction: L-aspartate is first activated by ATP to form Asp-AMP and then transferred to the acceptor end of tRNA(Asp). The sequence is that of Aspartate--tRNA ligase from Bacillus licheniformis (strain ATCC 14580 / DSM 13 / JCM 2505 / CCUG 7422 / NBRC 12200 / NCIMB 9375 / NCTC 10341 / NRRL NRS-1264 / Gibson 46).